The primary structure comprises 611 residues: Dihydroxy-acid dehydratase (611 aa).

Aspartate 81 serves as a coordination point for Mg(2+). Cysteine 122 is a [2Fe-2S] cluster binding site. Aspartate 123 and lysine 124 together coordinate Mg(2+). The residue at position 124 (lysine 124) is an N6-carboxylysine. Position 195 (cysteine 195) interacts with [2Fe-2S] cluster. Mg(2+) is bound at residue glutamate 491. The active-site Proton acceptor is the serine 517.

This sequence belongs to the IlvD/Edd family. Homodimer. The cofactor is [2Fe-2S] cluster. Requires Mg(2+) as cofactor.

It carries out the reaction (2R)-2,3-dihydroxy-3-methylbutanoate = 3-methyl-2-oxobutanoate + H2O. The enzyme catalyses (2R,3R)-2,3-dihydroxy-3-methylpentanoate = (S)-3-methyl-2-oxopentanoate + H2O. It participates in amino-acid biosynthesis; L-isoleucine biosynthesis; L-isoleucine from 2-oxobutanoate: step 3/4. Its pathway is amino-acid biosynthesis; L-valine biosynthesis; L-valine from pyruvate: step 3/4. Functions in the biosynthesis of branched-chain amino acids. Catalyzes the dehydration of (2R,3R)-2,3-dihydroxy-3-methylpentanoate (2,3-dihydroxy-3-methylvalerate) into 2-oxo-3-methylpentanoate (2-oxo-3-methylvalerate) and of (2R)-2,3-dihydroxy-3-methylbutanoate (2,3-dihydroxyisovalerate) into 2-oxo-3-methylbutanoate (2-oxoisovalerate), the penultimate precursor to L-isoleucine and L-valine, respectively. The polypeptide is Dihydroxy-acid dehydratase (Brucella melitensis biotype 1 (strain ATCC 23456 / CCUG 17765 / NCTC 10094 / 16M)).